Consider the following 165-residue polypeptide: uncharacterized protein (165 aa).

A helical transmembrane segment spans residues 4–26 (FVIGTMIALAGLLVGGGVGSYFT).

The protein localises to the membrane. This is an uncharacterized protein from Aquifex aeolicus (strain VF5).